The following is a 431-amino-acid chain: Tyrosine--tRNA ligase (431 aa).

Residue Y34 participates in L-tyrosine binding. The short motif at 39–48 (PTADSLHIGH) is the 'HIGH' region element. Positions 171 and 175 each coordinate L-tyrosine. Residues 231–235 (KFGKT) carry the 'KMSKS' region motif. ATP is bound at residue K234. The 70-residue stretch at 353–422 (INVVEALVKT…GKYTILRRGK (70 aa)) folds into the S4 RNA-binding domain.

This sequence belongs to the class-I aminoacyl-tRNA synthetase family. TyrS type 1 subfamily. As to quaternary structure, homodimer.

The protein resides in the cytoplasm. It catalyses the reaction tRNA(Tyr) + L-tyrosine + ATP = L-tyrosyl-tRNA(Tyr) + AMP + diphosphate + H(+). In terms of biological role, catalyzes the attachment of tyrosine to tRNA(Tyr) in a two-step reaction: tyrosine is first activated by ATP to form Tyr-AMP and then transferred to the acceptor end of tRNA(Tyr). This Neisseria meningitidis serogroup C / serotype 2a (strain ATCC 700532 / DSM 15464 / FAM18) protein is Tyrosine--tRNA ligase.